The chain runs to 207 residues: Outer-membrane lipoprotein LolB (207 aa).

Residues 1 to 21 form the signal peptide; it reads MPLPDFRLIRLLPLASLVLTA. Residue C22 is the site of N-palmitoyl cysteine attachment. C22 carries the S-diacylglycerol cysteine lipid modification.

It belongs to the LolB family. As to quaternary structure, monomer.

The protein localises to the cell outer membrane. Functionally, plays a critical role in the incorporation of lipoproteins in the outer membrane after they are released by the LolA protein. This chain is Outer-membrane lipoprotein LolB, found in Escherichia fergusonii (strain ATCC 35469 / DSM 13698 / CCUG 18766 / IAM 14443 / JCM 21226 / LMG 7866 / NBRC 102419 / NCTC 12128 / CDC 0568-73).